We begin with the raw amino-acid sequence, 185 residues long: Threonylcarbamoyl-AMP synthase (185 aa).

The YrdC-like domain maps to 4–185 (SFRVQQAARE…LATGEVVRPG (182 aa)).

The protein belongs to the SUA5 family. TsaC subfamily.

It localises to the cytoplasm. The catalysed reaction is L-threonine + hydrogencarbonate + ATP = L-threonylcarbamoyladenylate + diphosphate + H2O. Required for the formation of a threonylcarbamoyl group on adenosine at position 37 (t(6)A37) in tRNAs that read codons beginning with adenine. Catalyzes the conversion of L-threonine, HCO(3)(-)/CO(2) and ATP to give threonylcarbamoyl-AMP (TC-AMP) as the acyladenylate intermediate, with the release of diphosphate. The protein is Threonylcarbamoyl-AMP synthase of Pseudomonas putida (strain GB-1).